Here is a 174-residue protein sequence, read N- to C-terminus: Interferon gamma (174 aa).

The signal sequence occupies residues 1-23 (MNSTRCILALLLCLTQAMSGCYG). At Q24 the chain carries Pyrrolidone carboxylic acid. Residues N39 and N106 are each glycosylated (N-linked (GlcNAc...) asparagine).

It belongs to the type II (or gamma) interferon family. As to quaternary structure, homodimer. Interacts with IFNGR1 (via extracellular domain); this interaction promotes IFNGR1 dimerization. Released primarily from activated T lymphocytes.

The protein resides in the secreted. In terms of biological role, type II interferon produced by immune cells such as T-cells and NK cells that plays crucial roles in antimicrobial, antiviral, and antitumor responses by activating effector immune cells and enhancing antigen presentation. Primarily signals through the JAK-STAT pathway after interaction with its receptor IFNGR1 to affect gene regulation. Upon IFNG binding, IFNGR1 intracellular domain opens out to allow association of downstream signaling components JAK2, JAK1 and STAT1, leading to STAT1 activation, nuclear translocation and transcription of IFNG-regulated genes. Many of the induced genes are transcription factors such as IRF1 that are able to further drive regulation of a next wave of transcription. Plays a role in class I antigen presentation pathway by inducing a replacement of catalytic proteasome subunits with immunoproteasome subunits. In turn, increases the quantity, quality, and repertoire of peptides for class I MHC loading. Increases the efficiency of peptide generation also by inducing the expression of activator PA28 that associates with the proteasome and alters its proteolytic cleavage preference. Up-regulates as well MHC II complexes on the cell surface by promoting expression of several key molecules such as cathepsins B/CTSB, H/CTSH, and L/CTSL. Participates in the regulation of hematopoietic stem cells during development and under homeostatic conditions by affecting their development, quiescence, and differentiation. The polypeptide is Interferon gamma (IFNG) (Phodopus sungorus (Striped hairy-footed hamster)).